The following is a 647-amino-acid chain: DEAD-box ATP-dependent RNA helicase 18 (647 aa).

The Q motif signature appears at 23 to 51 (FSELSPALSPEVVKALKGGGFRRCTPVQA). The Helicase ATP-binding domain occupies 54-232 (IPLLLSHKDV…KAGLRNPVRV (179 aa)). Residue 67 to 74 (AATGSGKT) participates in ATP binding. A DEAD box motif is present at residues 180-183 (DEAD). The Helicase C-terminal domain maps to 274 to 430 (QLVDFLVQNN…DIVPQIRSAA (157 aa)). Residues 507-582 (KYKDKAREKQ…RLLKKLKRGV (76 aa)) adopt a coiled-coil conformation. The segment covering 512–545 (AREKQRQKTLKRKAEELALRPEIEKRRKAPEKPE) has biased composition (basic and acidic residues). 2 disordered regions span residues 512 to 565 (AREK…KEDM) and 590 to 647 (KLTG…TRRR). A compositionally biased stretch (acidic residues) spans 596–610 (ESDDDDSSDGGDSDL). The span at 619 to 633 (KVLKKIKQKGKAKGS) shows a compositional bias: basic residues.

The protein belongs to the DEAD box helicase family. DDX55/SPB4 subfamily. Interacts with BRI1. Post-translationally, phosphorylated.

It carries out the reaction ATP + H2O = ADP + phosphate + H(+). The protein is DEAD-box ATP-dependent RNA helicase 18 of Oryza sativa subsp. japonica (Rice).